Consider the following 412-residue polypeptide: Methylmalonic aciduria type A homolog, mitochondrial (412 aa).

The N-terminal 15 residues, 1-15 (MVVRALVRAHPLSRI), are a transit peptide targeting the mitochondrion. GTP contacts are provided by residues 132–140 (GSPGVGKSS), Asp-275, and 311–313 (SIM).

The protein belongs to the SIMIBI class G3E GTPase family. ArgK/MeaB subfamily.

It localises to the mitochondrion. Functionally, may have GTPase activity. May also bind and hydrolyze ATP. May function as chaperone. Likely to have a role in propionyl-CoA metabolism and adenosylcobalamin synthesis. This Caenorhabditis briggsae protein is Methylmalonic aciduria type A homolog, mitochondrial.